Here is a 319-residue protein sequence, read N- to C-terminus: MDGATYQRFPKIKIRELKDDYAKFELRETDVSMANALRRVMISEVPTVAIDLVEIEVNSSVLNDEFIAHRLGLIPLTSERAMSMRFSRDCDACDGDGQCEFCSVEFRLSSKCVTDQTLDVTSRDLYSADPTVTPVDFTIDSSVSDSSEHKGIIIVKLRRGQELKLRAIARKGIGKDHAKWSPAATVTFMYEPDIIINEDMMDTLSDEEKIDLIESSPTKVFGMDPVTRQVVVVDPEAYTYDEEVIKKAEAMGKPGLIEISPKDDSFIFTVESTGAVKASQLVLNAIDLLKQKLDAVRLSDDTVEADDQFGELGAHMRGG.

Methionine 1 carries the post-translational modification N-acetylmethionine.

It belongs to the archaeal Rpo3/eukaryotic RPB3 RNA polymerase subunit family. Component of the RNA polymerase II complex consisting of at least 12 subunits. Interacts with SHH1, CLSY1, NRPB11 and NRPD1. Interacts with IYO.

The protein localises to the nucleus. In terms of biological role, DNA-dependent RNA polymerase catalyzes the transcription of DNA into RNA using the four ribonucleoside triphosphates as substrates. Component of RNA polymerase II which synthesizes mRNA precursors and many functional non-coding RNAs. Pol II is the central component of the basal RNA polymerase II transcription machinery. It is composed of mobile elements that move relative to each other. NRPB3 is part of the core element with the central large cleft and the clamp element that moves to open and close the cleft. Component of RNA polymerases IV and V which mediate short-interfering RNAs (siRNA) accumulation and subsequent RNA-directed DNA methylation-dependent (RdDM) transcriptional gene silencing (TGS) of endogenous repeated sequences, including transposable elements. This is DNA-directed RNA polymerases II, IV and V subunit 3 (NRPB3) from Arabidopsis thaliana (Mouse-ear cress).